The following is a 210-amino-acid chain: Prolactin (210 aa).

The N-terminal stretch at 1–23 (MAEGSRLYFAVTVLMCAFVSING) is a signal peptide. Intrachain disulfides connect Cys69-Cys183 and Cys200-Cys210.

Belongs to the somatotropin/prolactin family. As to expression, pituitary gland.

The protein resides in the secreted. The polypeptide is Prolactin (prl) (Hypophthalmichthys nobilis (Bighead carp)).